We begin with the raw amino-acid sequence, 447 residues long: ATP-dependent protease ATPase subunit HslU (447 aa).

Residues isoleucine 18, 60 to 65, aspartate 259, glutamate 325, and arginine 397 each bind ATP; that span reads GVGKTE.

It belongs to the ClpX chaperone family. HslU subfamily. A double ring-shaped homohexamer of HslV is capped on each side by a ring-shaped HslU homohexamer. The assembly of the HslU/HslV complex is dependent on binding of ATP.

It localises to the cytoplasm. ATPase subunit of a proteasome-like degradation complex; this subunit has chaperone activity. The binding of ATP and its subsequent hydrolysis by HslU are essential for unfolding of protein substrates subsequently hydrolyzed by HslV. HslU recognizes the N-terminal part of its protein substrates and unfolds these before they are guided to HslV for hydrolysis. In Burkholderia thailandensis (strain ATCC 700388 / DSM 13276 / CCUG 48851 / CIP 106301 / E264), this protein is ATP-dependent protease ATPase subunit HslU.